The sequence spans 192 residues: Erythropoietin (192 aa).

Residues 1 to 26 (MGVRECPALLLLLSLLLPPLGLPALG) form the signal peptide. 2 cysteine pairs are disulfide-bonded: cysteine 33/cysteine 187 and cysteine 55/cysteine 59. N-linked (GlcNAc...) asparagine glycosylation is present at asparagine 50. Residues asparagine 64 and asparagine 109 are each glycosylated (N-linked (GlcNAc...) asparagine).

It belongs to the EPO/TPO family.

The protein resides in the secreted. Functionally, hormone involved in the regulation of erythrocyte proliferation and differentiation and the maintenance of a physiological level of circulating erythrocyte mass. Binds to EPOR leading to EPOR dimerization and JAK2 activation thereby activating specific downstream effectors, including STAT1 and STAT3. The chain is Erythropoietin (EPO) from Equus caballus (Horse).